The sequence spans 89 residues: Large ribosomal subunit protein bL31B (89 aa).

This sequence belongs to the bacterial ribosomal protein bL31 family. Type B subfamily. As to quaternary structure, part of the 50S ribosomal subunit.

The protein is Large ribosomal subunit protein bL31B of Haemophilus ducreyi (strain 35000HP / ATCC 700724).